A 274-amino-acid chain; its full sequence is tRNA-cytidine(32) 2-sulfurtransferase (274 aa).

Positions 40–45 (SGGKDS) match the PP-loop motif motif. Cys-115, Cys-118, and Cys-206 together coordinate [4Fe-4S] cluster.

It belongs to the TtcA family. Homodimer. The cofactor is Mg(2+). It depends on [4Fe-4S] cluster as a cofactor.

The protein localises to the cytoplasm. The enzyme catalyses cytidine(32) in tRNA + S-sulfanyl-L-cysteinyl-[cysteine desulfurase] + AH2 + ATP = 2-thiocytidine(32) in tRNA + L-cysteinyl-[cysteine desulfurase] + A + AMP + diphosphate + H(+). It functions in the pathway tRNA modification. Functionally, catalyzes the ATP-dependent 2-thiolation of cytidine in position 32 of tRNA, to form 2-thiocytidine (s(2)C32). The sulfur atoms are provided by the cysteine/cysteine desulfurase (IscS) system. The sequence is that of tRNA-cytidine(32) 2-sulfurtransferase from Pseudomonas putida (strain ATCC 700007 / DSM 6899 / JCM 31910 / BCRC 17059 / LMG 24140 / F1).